The chain runs to 254 residues: Ribosomal RNA large subunit methyltransferase E (254 aa).

Positions methionine 1–glycine 18 are enriched in gly residues. The interval methionine 1–valine 26 is disordered. The S-adenosyl-L-methionine site is built by glycine 89, tryptophan 91, aspartate 119, aspartate 135, and aspartate 159. The Proton acceptor role is filled by lysine 199.

The protein belongs to the class I-like SAM-binding methyltransferase superfamily. RNA methyltransferase RlmE family.

It is found in the cytoplasm. The enzyme catalyses uridine(2552) in 23S rRNA + S-adenosyl-L-methionine = 2'-O-methyluridine(2552) in 23S rRNA + S-adenosyl-L-homocysteine + H(+). Functionally, specifically methylates the uridine in position 2552 of 23S rRNA at the 2'-O position of the ribose in the fully assembled 50S ribosomal subunit. The protein is Ribosomal RNA large subunit methyltransferase E of Parvibaculum lavamentivorans (strain DS-1 / DSM 13023 / NCIMB 13966).